The chain runs to 132 residues: Small ribosomal subunit protein uS9 (132 aa).

This sequence belongs to the universal ribosomal protein uS9 family.

The chain is Small ribosomal subunit protein uS9 (rps9) from Thermoplasma volcanium (strain ATCC 51530 / DSM 4299 / JCM 9571 / NBRC 15438 / GSS1).